A 753-amino-acid chain; its full sequence is Polyribonucleotide nucleotidyltransferase (753 aa).

Mg(2+)-binding residues include aspartate 488 and aspartate 494. Residues 555 to 614 (PKLYTMKINPEKIRDVIGKGGSTIRALTEETGTQIDIGEDGTITIASSDAAKADEAKRRI) enclose the KH domain. The region spanning 624 to 692 (GKIYEGPVTK…EKGRVKLSLK (69 aa)) is the S1 motif domain. Positions 692-753 (KALTERPAGM…EGEQQQQQQQ (62 aa)) are disordered. The span at 699–739 (AGMERSDRPAPAEREFRQPREPRQQREFREPREPREPRDGG) shows a compositional bias: basic and acidic residues.

The protein belongs to the polyribonucleotide nucleotidyltransferase family. It depends on Mg(2+) as a cofactor.

It is found in the cytoplasm. It carries out the reaction RNA(n+1) + phosphate = RNA(n) + a ribonucleoside 5'-diphosphate. Involved in mRNA degradation. Catalyzes the phosphorolysis of single-stranded polyribonucleotides processively in the 3'- to 5'-direction. The chain is Polyribonucleotide nucleotidyltransferase from Delftia acidovorans (strain DSM 14801 / SPH-1).